The sequence spans 127 residues: MRHRKSGRQLNRNSSHRQAMFRNMAGSLVRHEIIKTTLPKAKELRRVVEPLITLAKTDSVANRRLAFARTRDNEIVAKLFNELGPRFASRAGGYTRILKCGFRAGDNAPMAYIELVDRSEKTEAAAE.

This sequence belongs to the bacterial ribosomal protein bL17 family. As to quaternary structure, part of the 50S ribosomal subunit. Contacts protein L32.

This is Large ribosomal subunit protein bL17 from Salmonella paratyphi A (strain AKU_12601).